Reading from the N-terminus, the 1193-residue chain is Kinesin-related protein 3 (1193 aa).

Residues 3–329 (SIRVVCRFRP…LRFGSRAKNI (327 aa)) enclose the Kinesin motor domain. 85-92 (GQTGSGKT) contacts ATP. 7 disordered regions span residues 377-429 (KSSG…SSNV), 573-600 (SSIASLVPSTPKSSAEMDPLATASKHAD), 611-630 (LLQRTPSKAVGSSKSNTATS), 638-665 (ISESDNIGSGATTTTNNNNATITPATSS), 973-1016 (GGGG…SANL), 1032-1114 (KAEP…PVKI), and 1127-1193 (FKKK…QQKD). Residues 405 to 429 (SSNLSNSVNSTSNLNTSSNTSSSNV) are compositionally biased toward low complexity. The stretch at 450–962 (ELIKVLQEKC…SQVGVDAQNT (513 aa)) forms a coiled coil. 2 stretches are compositionally biased toward polar residues: residues 573–585 (SSIASLVPSTPKS) and 614–630 (RTPSKAVGSSKSNTATS). Composition is skewed to low complexity over residues 643-665 (NIGSGATTTTNNNNATITPATSS) and 985-1006 (HSSSSSTSSSSALNHSSINNNH). The segment covering 1007-1016 (TTPTPLSANL) has biased composition (polar residues). 3 stretches are compositionally biased toward low complexity: residues 1044–1078 (NTSIPSSPNHTSSNNINNNSNNNNNNNNNNNIGNS), 1086–1109 (NNNSSISNSNNNSSSNLNANLNGN), and 1132–1149 (PSSTPPSSTNNLSPQSPQ). Polar residues-rich tracts occupy residues 1150 to 1165 (TPSHLSADGSGNISPN) and 1174 to 1193 (FSYTPAVVTSSTINKDQQKD).

Belongs to the TRAFAC class myosin-kinesin ATPase superfamily. Kinesin family. Kinesin subfamily. In terms of assembly, dimer.

The protein resides in the cytoplasm. It is found in the cytoskeleton. In terms of biological role, microtubule-associated force-producing protein that plays a role in organelle transport. Its motor activity is directed toward the microtubule's plus end. The maximal velocity in an inverted motility assay (moving microtubules on fixed motors) was 1.96 um/s. The chain is Kinesin-related protein 3 (kif3) from Dictyostelium discoideum (Social amoeba).